The chain runs to 281 residues: MEMO1 family protein Pars_0062 (281 aa).

This sequence belongs to the MEMO1 family.

In Pyrobaculum arsenaticum (strain DSM 13514 / JCM 11321 / PZ6), this protein is MEMO1 family protein Pars_0062.